Here is a 1679-residue protein sequence, read N- to C-terminus: Probable myosin heavy chain ECU04_1000 (1679 aa).

Residues 1–14 (MEGTTNKDIGSGSS) show a composition bias toward polar residues. Positions 1–22 (MEGTTNKDIGSGSSRPGGEVSV) are disordered. One can recognise a Myosin N-terminal SH3-like domain in the interval 31–79 (MEKKWVWAPSSKEAYVCGFVVKEEGDVLEIDCRGVIVRHKSCEVFRMNP). In terms of domain architecture, Myosin motor spans 83 to 754 (DMVDDLAELS…VLADIEDMRD (672 aa)). 176 to 183 (GESGAGKT) serves as a coordination point for ATP. Positions 624–646 (LASLMSELRRTNPHFVRCIIPNL) are actin-binding. The stretch at 823-1644 (GEMKEKEAMI…SKMLEMKKKL (822 aa)) forms a coiled coil.

This sequence belongs to the TRAFAC class myosin-kinesin ATPase superfamily. Myosin family.

Its function is as follows. Cellular myosin that appears to play a role in cytokinesis, cell shape, and specialized functions such as secretion and capping. This Encephalitozoon cuniculi (strain GB-M1) (Microsporidian parasite) protein is Probable myosin heavy chain ECU04_1000.